A 940-amino-acid chain; its full sequence is Lon protease homolog 1, mitochondrial (940 aa).

A mitochondrion-targeting transit peptide spans 1–61; the sequence is MLKLFTSSAS…AFFCSEPTNG (61 aa). Residues 70–90 are disordered; that stretch reads KAVESDSEVSDSKSSSAIVPT. S74 is subject to Phosphoserine. One can recognise a Lon N-terminal domain in the interval 100–309; that stretch reads VLALPVPHRP…LTLELMKKEM (210 aa). 464 to 471 contacts ATP; sequence GPPGVGKT. Positions 751–935 constitute a Lon proteolytic domain; the sequence is QTPVGVVMGL…GKIFELAFGY (185 aa). Catalysis depends on residues S841 and K884.

Belongs to the peptidase S16 family. As to quaternary structure, homohexamer or homoheptamer. Organized in a ring with a central cavity.

The protein localises to the mitochondrion matrix. It catalyses the reaction Hydrolysis of proteins in presence of ATP.. Functionally, ATP-dependent serine protease that mediates the selective degradation of misfolded, unassembled or oxidatively damaged polypeptides as well as certain short-lived regulatory proteins in the mitochondrial matrix. May also have a chaperone function in the assembly of inner membrane protein complexes. Participates in the regulation of mitochondrial gene expression and in the maintenance of the integrity of the mitochondrial genome. Binds to mitochondrial DNA in a site-specific manner. The protein is Lon protease homolog 1, mitochondrial (LON1) of Arabidopsis thaliana (Mouse-ear cress).